Consider the following 179-residue polypeptide: Large ribosomal subunit protein uL5 (179 aa).

It belongs to the universal ribosomal protein uL5 family. As to quaternary structure, part of the 50S ribosomal subunit; part of the 5S rRNA/L5/L18/L25 subcomplex. Contacts the 5S rRNA and the P site tRNA. Forms a bridge to the 30S subunit in the 70S ribosome.

Its function is as follows. This is one of the proteins that bind and probably mediate the attachment of the 5S RNA into the large ribosomal subunit, where it forms part of the central protuberance. In the 70S ribosome it contacts protein S13 of the 30S subunit (bridge B1b), connecting the 2 subunits; this bridge is implicated in subunit movement. Contacts the P site tRNA; the 5S rRNA and some of its associated proteins might help stabilize positioning of ribosome-bound tRNAs. This chain is Large ribosomal subunit protein uL5, found in Vibrio parahaemolyticus serotype O3:K6 (strain RIMD 2210633).